A 409-amino-acid chain; its full sequence is Argininosuccinate synthase (409 aa).

Residues Ala11–Ser19 and Ala38 contribute to the ATP site. L-citrulline is bound by residues Tyr91 and Ser96. Gly121 is an ATP binding site. Residues Thr123, Asn127, and Asp128 each contribute to the L-aspartate site. L-citrulline is bound at residue Asn127. Residues Arg131, Ser182, Ser191, Glu267, and Tyr279 each contribute to the L-citrulline site.

Belongs to the argininosuccinate synthase family. Type 1 subfamily. As to quaternary structure, homotetramer.

The protein localises to the cytoplasm. The enzyme catalyses L-citrulline + L-aspartate + ATP = 2-(N(omega)-L-arginino)succinate + AMP + diphosphate + H(+). Its pathway is amino-acid biosynthesis; L-arginine biosynthesis; L-arginine from L-ornithine and carbamoyl phosphate: step 2/3. The chain is Argininosuccinate synthase from Nitrobacter winogradskyi (strain ATCC 25391 / DSM 10237 / CIP 104748 / NCIMB 11846 / Nb-255).